Here is a 452-residue protein sequence, read N- to C-terminus: Gastrin/cholecystokinin type B receptor (452 aa).

Residues 1-57 (MELLKLNRSLPGPGPGAALCRPEGPLLNGSGAGNLSCEPPRIRGAGTRELELAVRIT) lie on the Extracellular side of the membrane. 3 N-linked (GlcNAc...) asparagine glycosylation sites follow: Asn-7, Asn-28, and Asn-34. A helical transmembrane segment spans residues 58–78 (LYAAIFLMSVAGNVLIIVVLG). Over 79–99 (LSRRLRTVTNAFLLSLAVSDL) the chain is Cytoplasmic. A helical membrane pass occupies residues 100–120 (LLAVACMPFTLLPNLMGTFIF). Residues 121–127 (GTVVCKA) are Extracellular-facing. Cysteines 125 and 203 form a disulfide. A helical transmembrane segment spans residues 128–148 (VSYFMGVSVSVSTLSLVAIAL). Over 149–171 (ERYSAICRPLQARVWQTRSHAAR) the chain is Cytoplasmic. The chain crosses the membrane as a helical span at residues 172–192 (VIVATWMLSGLLMVPYPVYTA). Residues 193–218 (VQPAGPRVLQCMHRWPSARIRQTWSV) are Extracellular-facing. The chain crosses the membrane as a helical span at residues 219–239 (LLLLLLFFVPGVVMAVAYGLI). Residues 240 to 339 (SRELYLGLRF…LLAKKRVVRM (100 aa)) are Cytoplasmic-facing. The disordered stretch occupies residues 256-285 (ESQSQVGSQGGLPGGAGQGPAHPNGHCRSE). Residues 263 to 273 (SQGGLPGGAGQ) show a composition bias toward gly residues. Residues 340-360 (LLVIVVLFFLCWLPVYSANTW) traverse the membrane as a helical segment. The Extracellular segment spans residues 361–376 (RAFDGPGAHRALSGAP). A helical transmembrane segment spans residues 377-397 (ISFIHLLSYASACVNPLVYCF). The Cytoplasmic portion of the chain corresponds to 398-452 (MHRRFRQACLDTCARCCPRPPRARPRPLPDEDPPTPSIASLSRLSYTTISTLGPG). Cys-413 carries the S-palmitoyl cysteine lipid modification.

It belongs to the G-protein coupled receptor 1 family.

The protein localises to the cell membrane. Its function is as follows. Receptor for gastrin and cholecystokinin. The CCK-B receptors occur throughout the central nervous system where they modulate anxiety, analgesia, arousal, and neuroleptic activity. This receptor mediates its action by association with G proteins that activate a phosphatidylinositol-calcium second messenger system. The sequence is that of Gastrin/cholecystokinin type B receptor from Sus scrofa (Pig).